Here is a 233-residue protein sequence, read N- to C-terminus: MHTVIRQMSQLRLQAMPSSALLKATASASAPSALDHSGAAVNHHSLHTAAGSGGALCASWNKHNNGPRKWLVYNKTVHPPQQPDEEPRKAYVCHMRSNIKYSPDKMWYIAAFVRGMSVDEALKQLNFVLKKGATDVKETILEAQEMAVQRHNVEYKSNLWVAESFVGKGRVFKGMRRHARGRFGQVEYKHCHYFVRLEEGQPPEHYYQEPQTPEQQYEHWLEQMRSRKVINSL.

Belongs to the universal ribosomal protein uL22 family. In terms of assembly, component of the mitochondrial ribosome large subunit (39S) which comprises a 16S rRNA and about 50 distinct proteins.

The protein resides in the mitochondrion. In Drosophila pseudoobscura pseudoobscura (Fruit fly), this protein is Large ribosomal subunit protein uL22m (mRpL22).